We begin with the raw amino-acid sequence, 65 residues long: Antimicrobial peptide 1 (65 aa).

Positions 1 to 27 (MAKVSSAYLKFALVMILLLSVISAVMS) are cleaved as a signal peptide. 3 cysteine pairs are disulfide-bonded: cysteine 30-cysteine 47, cysteine 37-cysteine 51, and cysteine 46-cysteine 62.

The protein belongs to the AMP family. As to expression, seed specific.

It localises to the secreted. Possesses antifungal activity. The sequence is that of Antimicrobial peptide 1 from Phytolacca americana (American pokeweed).